The primary structure comprises 989 residues: Translation initiation factor IF-2 (989 aa).

Disordered regions lie at residues glycine 28–aspartate 60 and valine 97–threonine 397. Basic and acidic residues-rich tracts occupy residues glutamate 40–aspartate 60 and glutamate 122–lysine 178. The span at alanine 182 to alanine 223 shows a compositional bias: low complexity. Residues glutamate 231 to arginine 280 show a composition bias toward basic and acidic residues. Low complexity predominate over residues arginine 318–alanine 345. The span at threonine 374 to lysine 387 shows a compositional bias: gly residues. A tr-type G domain is found at proline 489–lysine 658. The G1 stretch occupies residues glycine 498–threonine 505. Position 498–505 (glycine 498–threonine 505) interacts with GTP. The tract at residues glycine 523–histidine 527 is G2. The G3 stretch occupies residues aspartate 544–glycine 547. GTP is bound by residues aspartate 544–histidine 548 and asparagine 598–aspartate 601. Residues asparagine 598 to aspartate 601 are G4. The tract at residues serine 634 to lysine 636 is G5.

The protein belongs to the TRAFAC class translation factor GTPase superfamily. Classic translation factor GTPase family. IF-2 subfamily.

The protein localises to the cytoplasm. In terms of biological role, one of the essential components for the initiation of protein synthesis. Protects formylmethionyl-tRNA from spontaneous hydrolysis and promotes its binding to the 30S ribosomal subunits. Also involved in the hydrolysis of GTP during the formation of the 70S ribosomal complex. This chain is Translation initiation factor IF-2, found in Paraburkholderia xenovorans (strain LB400).